A 321-amino-acid polypeptide reads, in one-letter code: Calcium-regulated beta-propeller protein CarP (321 aa).

The first 42 residues, 1 to 42 (MTIHAQTPEPFSMSRAFTPRRLLLAVLLVALSALVLLGQSFR), serve as a signal peptide directing secretion.

Belongs to the YjiK family.

Its subcellular location is the cell inner membrane. Functionally, plays a role in intracellular Ca(2+) homeostasis. Involved in modulating Ca(2+)-induced swarming motility and pyocyanine production. Plays a role in regulating virulence in a Ca(2+)-dependent manner. Involved in cell protection against oxidative stress in the presence of elevated Ca(2+). This Pseudomonas aeruginosa (strain ATCC 15692 / DSM 22644 / CIP 104116 / JCM 14847 / LMG 12228 / 1C / PRS 101 / PAO1) protein is Calcium-regulated beta-propeller protein CarP.